Consider the following 96-residue polypeptide: Co-chaperonin GroES (96 aa).

This sequence belongs to the GroES chaperonin family. Heptamer of 7 subunits arranged in a ring. Interacts with the chaperonin GroEL.

The protein localises to the cytoplasm. Together with the chaperonin GroEL, plays an essential role in assisting protein folding. The GroEL-GroES system forms a nano-cage that allows encapsulation of the non-native substrate proteins and provides a physical environment optimized to promote and accelerate protein folding. GroES binds to the apical surface of the GroEL ring, thereby capping the opening of the GroEL channel. The sequence is that of Co-chaperonin GroES from Vibrio campbellii (strain ATCC BAA-1116).